Consider the following 303-residue polypeptide: Glutamate formimidoyltransferase (303 aa).

H81 (for formimidoyltransferase activity) is an active-site residue. 164–172 is a binding site for folate; the sequence is GPSVVGKAG.

This sequence belongs to the formiminotransferase family.

The protein resides in the cytoplasm. It catalyses the reaction (6S)-5-formyl-5,6,7,8-tetrahydrofolate + L-glutamate = N-formyl-L-glutamate + (6S)-5,6,7,8-tetrahydrofolate + H(+). It carries out the reaction 5-formimidoyltetrahydrofolate + L-glutamate = N-formimidoyl-L-glutamate + (6S)-5,6,7,8-tetrahydrofolate. The catalysed reaction is (6S)-5-formyl-5,6,7,8-tetrahydrofolate + ATP = (6R)-5,10-methenyltetrahydrofolate + ADP + phosphate. It participates in amino-acid degradation; L-histidine degradation into L-glutamate; L-glutamate from N-formimidoyl-L-glutamate (transferase route): step 1/1. Its pathway is one-carbon metabolism; tetrahydrofolate interconversion. Functionally, catalyzes the transfer of the formyl group from N-formylglutamate to tetrahydrofolate (THF) to yield 5-formyltetrahydrofolate (5-CHO-THF) and glutamate (Glu). The triglutamate form of 5-CHO-THF (5-CHO-THF-Glu3) can also be used as substrate. It can also catalyze the transfer of the formimino group from N-formiminoglutamate to tetrahydrofolate (THF) to yield 5-formiminotetrahydrofolate (5-NH=CH-THF) and glutamate (Glu). It can replace YgfA to catalyze the irreversible ATP-dependent transformation of 5-CHO-THF to form 5,10-methenyltetrahydrofolate (5,10-CH=THF). The chain is Glutamate formimidoyltransferase from Thermoplasma acidophilum (strain ATCC 25905 / DSM 1728 / JCM 9062 / NBRC 15155 / AMRC-C165).